Consider the following 141-residue polypeptide: Nucleoside diphosphate kinase (141 aa).

ATP-binding residues include lysine 11, phenylalanine 59, arginine 87, threonine 93, arginine 104, and asparagine 114. Catalysis depends on histidine 117, which acts as the Pros-phosphohistidine intermediate.

It belongs to the NDK family. Homotetramer. The cofactor is Mg(2+).

Its subcellular location is the cytoplasm. The catalysed reaction is a 2'-deoxyribonucleoside 5'-diphosphate + ATP = a 2'-deoxyribonucleoside 5'-triphosphate + ADP. It catalyses the reaction a ribonucleoside 5'-diphosphate + ATP = a ribonucleoside 5'-triphosphate + ADP. In terms of biological role, major role in the synthesis of nucleoside triphosphates other than ATP. The ATP gamma phosphate is transferred to the NDP beta phosphate via a ping-pong mechanism, using a phosphorylated active-site intermediate. The sequence is that of Nucleoside diphosphate kinase from Leptothrix cholodnii (strain ATCC 51168 / LMG 8142 / SP-6) (Leptothrix discophora (strain SP-6)).